Reading from the N-terminus, the 206-residue chain is Small ribosomal subunit protein uS4 (206 aa).

The 62-residue stretch at 96–157 folds into the S4 RNA-binding domain; the sequence is GRLDNVVYRM…KAKKQSRVRA (62 aa).

It belongs to the universal ribosomal protein uS4 family. Part of the 30S ribosomal subunit. Contacts protein S5. The interaction surface between S4 and S5 is involved in control of translational fidelity.

Its function is as follows. One of the primary rRNA binding proteins, it binds directly to 16S rRNA where it nucleates assembly of the body of the 30S subunit. In terms of biological role, with S5 and S12 plays an important role in translational accuracy. This Sodalis glossinidius (strain morsitans) protein is Small ribosomal subunit protein uS4.